The sequence spans 350 residues: Selenide, water dikinase (350 aa).

The active site involves cysteine 17. ATP-binding positions include lysine 20 and 48–50 (LFD). Position 51 (aspartate 51) interacts with Mg(2+). Residues aspartate 68, aspartate 91, and 139–141 (GHS) contribute to the ATP site. Aspartate 91 is a Mg(2+) binding site. Aspartate 229 provides a ligand contact to Mg(2+).

This sequence belongs to the selenophosphate synthase 1 family. Class I subfamily. In terms of assembly, homodimer. It depends on Mg(2+) as a cofactor.

It catalyses the reaction hydrogenselenide + ATP + H2O = selenophosphate + AMP + phosphate + 2 H(+). Synthesizes selenophosphate from selenide and ATP. The protein is Selenide, water dikinase of Bdellovibrio bacteriovorus (strain ATCC 15356 / DSM 50701 / NCIMB 9529 / HD100).